The following is a 279-amino-acid chain: Urease accessory protein UreD (279 aa).

It belongs to the UreD family. In terms of assembly, ureD, UreF and UreG form a complex that acts as a GTP-hydrolysis-dependent molecular chaperone, activating the urease apoprotein by helping to assemble the nickel containing metallocenter of UreC. The UreE protein probably delivers the nickel.

It localises to the cytoplasm. Its function is as follows. Required for maturation of urease via the functional incorporation of the urease nickel metallocenter. The polypeptide is Urease accessory protein UreD (Nitrosospira multiformis (strain ATCC 25196 / NCIMB 11849 / C 71)).